Here is a 120-residue protein sequence, read N- to C-terminus: Large ribosomal subunit protein bL12 (120 aa).

Belongs to the bacterial ribosomal protein bL12 family. As to quaternary structure, homodimer. Part of the ribosomal stalk of the 50S ribosomal subunit. Forms a multimeric L10(L12)X complex, where L10 forms an elongated spine to which 2 to 4 L12 dimers bind in a sequential fashion. Binds GTP-bound translation factors.

In terms of biological role, forms part of the ribosomal stalk which helps the ribosome interact with GTP-bound translation factors. Is thus essential for accurate translation. In Alkaliphilus metalliredigens (strain QYMF), this protein is Large ribosomal subunit protein bL12.